Here is a 441-residue protein sequence, read N- to C-terminus: tRNA-2-methylthio-N(6)-dimethylallyladenosine synthase (441 aa).

An MTTase N-terminal domain is found at 5-121; the sequence is KKLFIKTYGC…LPQMEARLRE (117 aa). 6 residues coordinate [4Fe-4S] cluster: Cys-14, Cys-50, Cys-84, Cys-159, Cys-163, and Cys-166. A Radical SAM core domain is found at 145–380; it reads ARRAPSAFLT…TRQQQDIQQS (236 aa). Residues 379-441 enclose the TRAM domain; sequence QSMVGRDVSV…RNSLAAVTLA (63 aa).

This sequence belongs to the methylthiotransferase family. MiaB subfamily. As to quaternary structure, monomer. [4Fe-4S] cluster serves as cofactor.

The protein resides in the cytoplasm. It catalyses the reaction N(6)-dimethylallyladenosine(37) in tRNA + (sulfur carrier)-SH + AH2 + 2 S-adenosyl-L-methionine = 2-methylsulfanyl-N(6)-dimethylallyladenosine(37) in tRNA + (sulfur carrier)-H + 5'-deoxyadenosine + L-methionine + A + S-adenosyl-L-homocysteine + 2 H(+). Catalyzes the methylthiolation of N6-(dimethylallyl)adenosine (i(6)A), leading to the formation of 2-methylthio-N6-(dimethylallyl)adenosine (ms(2)i(6)A) at position 37 in tRNAs that read codons beginning with uridine. This is tRNA-2-methylthio-N(6)-dimethylallyladenosine synthase from Roseobacter denitrificans (strain ATCC 33942 / OCh 114) (Erythrobacter sp. (strain OCh 114)).